A 278-amino-acid polypeptide reads, in one-letter code: 2-(acetamidomethylene)succinate hydrolase (278 aa).

Chloride contacts are provided by residues Ile41 and 106 to 107; that span reads SL. Residue Ser106 is the Nucleophile of the active site. Active-site residues include Asp130 and His258.

It belongs to the AB hydrolase superfamily. In terms of assembly, homodimer.

The enzyme catalyses 2-(acetamidomethylene)succinate + 2 H2O + H(+) = succinate semialdehyde + acetate + NH4(+) + CO2. It participates in cofactor degradation; B6 vitamer degradation. Its function is as follows. Catalyzes the final reaction in the degradation of vitamin B6 from (E)-2-(acetamidomethylene)succinate (E-2AMS) to produce succinic semialdehyde, acetate, ammonia and carbon dioxide. The sequence is that of 2-(acetamidomethylene)succinate hydrolase from Mesorhizobium japonicum (strain LMG 29417 / CECT 9101 / MAFF 303099) (Mesorhizobium loti (strain MAFF 303099)).